A 111-amino-acid chain; its full sequence is Nucleoid-associated protein CYB_2894 (111 aa).

The protein belongs to the YbaB/EbfC family. As to quaternary structure, homodimer.

The protein resides in the cytoplasm. It localises to the nucleoid. Functionally, binds to DNA and alters its conformation. May be involved in regulation of gene expression, nucleoid organization and DNA protection. This Synechococcus sp. (strain JA-2-3B'a(2-13)) (Cyanobacteria bacterium Yellowstone B-Prime) protein is Nucleoid-associated protein CYB_2894.